Here is a 346-residue protein sequence, read N- to C-terminus: MEKLARQQIQALTPYLSARRIGGSGDVWLNANESPFNNEYKTDFARLNRYSDCQPKAMIQAYANYAGVQPEQVLTSRGADEGIELLIRAFCEPNQDAILFCPPTYGMYAISAETFGVERKKVPLTTDWQLDLPSIEANLDRVKLVFVCSPNNPTGNLVKRADIIKLLEMTQDRAIVVMDEAYIDFCPEASTVDLLAQYPNLAILRTLSKAFALAGLRCGFTLANAELINVLLKVIAPYPVPVPVAEIAVQALSPAGLARAKYQVLDLGANRAYLQVGLSMVPGVQVFEGWGNYLLVKFPDGDALFKAAWEHGIILRNSPIENCVRISVGNREECEKTVAFIRNYYQ.

K209 is subject to N6-(pyridoxal phosphate)lysine.

This sequence belongs to the class-II pyridoxal-phosphate-dependent aminotransferase family. Histidinol-phosphate aminotransferase subfamily. In terms of assembly, homodimer. It depends on pyridoxal 5'-phosphate as a cofactor.

It catalyses the reaction L-histidinol phosphate + 2-oxoglutarate = 3-(imidazol-4-yl)-2-oxopropyl phosphate + L-glutamate. Its pathway is amino-acid biosynthesis; L-histidine biosynthesis; L-histidine from 5-phospho-alpha-D-ribose 1-diphosphate: step 7/9. This Vibrio cholerae serotype O1 (strain ATCC 39541 / Classical Ogawa 395 / O395) protein is Histidinol-phosphate aminotransferase.